Here is a 130-residue protein sequence, read N- to C-terminus: Large ribosomal subunit protein bL20 (130 aa).

It belongs to the bacterial ribosomal protein bL20 family.

Binds directly to 23S ribosomal RNA and is necessary for the in vitro assembly process of the 50S ribosomal subunit. It is not involved in the protein synthesizing functions of that subunit. The chain is Large ribosomal subunit protein bL20 from Nocardioides sp. (strain ATCC BAA-499 / JS614).